A 79-amino-acid polypeptide reads, in one-letter code: D-alanyl carrier protein (79 aa).

Positions 1–77 constitute a Carrier domain; sequence MDTKQGVLDI…KIVAKVESLE (77 aa). Ser35 bears the O-(pantetheine 4'-phosphoryl)serine mark.

This sequence belongs to the DltC family. In terms of processing, 4'-phosphopantetheine is transferred from CoA to a specific serine of apo-DCP.

The protein localises to the cytoplasm. It participates in cell wall biogenesis; lipoteichoic acid biosynthesis. In terms of biological role, carrier protein involved in the D-alanylation of lipoteichoic acid (LTA). The loading of thioester-linked D-alanine onto DltC is catalyzed by D-alanine--D-alanyl carrier protein ligase DltA. The DltC-carried D-alanyl group is further transferred to cell membrane phosphatidylglycerol (PG) by forming an ester bond, probably catalyzed by DltD. D-alanylation of LTA plays an important role in modulating the properties of the cell wall in Gram-positive bacteria, influencing the net charge of the cell wall. The polypeptide is D-alanyl carrier protein (Lactobacillus helveticus (strain DPC 4571)).